Reading from the N-terminus, the 53-residue chain is ATP synthase protein 8 (53 aa).

The helical transmembrane segment at 10–30 (IMVFLVSMALLWAIMTMVFFL) threads the bilayer.

This sequence belongs to the ATPase protein 8 family. As to quaternary structure, F-type ATPases have 2 components, CF(1) - the catalytic core - and CF(0) - the membrane proton channel.

Its subcellular location is the mitochondrion membrane. In terms of biological role, mitochondrial membrane ATP synthase (F(1)F(0) ATP synthase or Complex V) produces ATP from ADP in the presence of a proton gradient across the membrane which is generated by electron transport complexes of the respiratory chain. F-type ATPases consist of two structural domains, F(1) - containing the extramembraneous catalytic core and F(0) - containing the membrane proton channel, linked together by a central stalk and a peripheral stalk. During catalysis, ATP synthesis in the catalytic domain of F(1) is coupled via a rotary mechanism of the central stalk subunits to proton translocation. Part of the complex F(0) domain. Minor subunit located with subunit a in the membrane. In Artemia franciscana (Brine shrimp), this protein is ATP synthase protein 8 (MT-ATP8).